The sequence spans 263 residues: Imidazole glycerol phosphate synthase subunit HisF (263 aa).

Residues aspartate 11 and aspartate 131 contribute to the active site.

It belongs to the HisA/HisF family. Heterodimer of HisH and HisF.

It localises to the cytoplasm. The enzyme catalyses 5-[(5-phospho-1-deoxy-D-ribulos-1-ylimino)methylamino]-1-(5-phospho-beta-D-ribosyl)imidazole-4-carboxamide + L-glutamine = D-erythro-1-(imidazol-4-yl)glycerol 3-phosphate + 5-amino-1-(5-phospho-beta-D-ribosyl)imidazole-4-carboxamide + L-glutamate + H(+). It functions in the pathway amino-acid biosynthesis; L-histidine biosynthesis; L-histidine from 5-phospho-alpha-D-ribose 1-diphosphate: step 5/9. IGPS catalyzes the conversion of PRFAR and glutamine to IGP, AICAR and glutamate. The HisF subunit catalyzes the cyclization activity that produces IGP and AICAR from PRFAR using the ammonia provided by the HisH subunit. This is Imidazole glycerol phosphate synthase subunit HisF from Deinococcus geothermalis (strain DSM 11300 / CIP 105573 / AG-3a).